The following is a 1023-amino-acid chain: GATOR2 complex protein WDR24 (1023 aa).

7 WD repeats span residues 16-54 (NLGS…FKVT), 64-108 (SLNY…SKSV), 114-154 (DHSR…NASK), 159-199 (PKSE…IAVE), 203-243 (SHQG…SLNN), 245-287 (STIS…IPLF), and 291-329 (DHRD…KPYQ). Residues 563–578 (SKNIIDNSNDSNQEIN) are compositionally biased toward low complexity. Disordered regions lie at residues 563–621 (SKNI…EPPS) and 661–824 (QKST…SIEN). Positions 584 to 593 (KEDEEEDDDN) are enriched in acidic residues. The segment covering 661–681 (QKSTDNISDNNSNVHVNIKRQ) has biased composition (polar residues). The segment covering 682-695 (NQPTNNNNNNSNID) has biased composition (low complexity). Residues 696–742 (NLEKKSNKSKSTKENKESSLTDQNKQKRNDNKEKIDNNEIDNDNKDN) are compositionally biased toward basic and acidic residues. A compositionally biased stretch (acidic residues) spans 743-759 (NDDDDNDVDNIGEDNDE). Low complexity predominate over residues 760–812 (INNNNDNNNNNNNNNNNNNNNNNNNNNNNNNNNNNNNNKNNNNDNNNNNNINN). The C4-type zinc finger occupies 947–969 (ACSSCGKSIPQNSIICEKCNKAS). Positions 948, 951, 962, 965, 972, 975, 986, 989, 991, 994, 997, 1010, 1014, 1016, and 1018 each coordinate Zn(2+). The RING-type; atypical zinc finger occupies 970 to 1021 (SKCSICRLPVKGMWVWCQGCGHGGHLEHMKSWFIDKNQKSCPTGCTHICTPF).

Belongs to the WD repeat WDR24 family. In terms of assembly, probably part of the GATOR complex.

It is found in the lysosome membrane. The catalysed reaction is S-ubiquitinyl-[E2 ubiquitin-conjugating enzyme]-L-cysteine + [acceptor protein]-L-lysine = [E2 ubiquitin-conjugating enzyme]-L-cysteine + N(6)-ubiquitinyl-[acceptor protein]-L-lysine.. It participates in protein modification; protein ubiquitination. As a component of the GATOR complex may function in the amino acid-sensing branch of the TORC1 signaling pathway. The protein is GATOR2 complex protein WDR24 of Dictyostelium discoideum (Social amoeba).